Here is a 314-residue protein sequence, read N- to C-terminus: tRNA dimethylallyltransferase (314 aa).

Gly-11–Thr-18 contacts ATP. Position 13 to 18 (Thr-13 to Thr-18) interacts with substrate. The segment at Asp-36 to Gln-39 is interaction with substrate tRNA.

It belongs to the IPP transferase family. As to quaternary structure, monomer. The cofactor is Mg(2+).

It carries out the reaction adenosine(37) in tRNA + dimethylallyl diphosphate = N(6)-dimethylallyladenosine(37) in tRNA + diphosphate. Functionally, catalyzes the transfer of a dimethylallyl group onto the adenine at position 37 in tRNAs that read codons beginning with uridine, leading to the formation of N6-(dimethylallyl)adenosine (i(6)A). The protein is tRNA dimethylallyltransferase of Chlamydia muridarum (strain MoPn / Nigg).